A 279-amino-acid polypeptide reads, in one-letter code: Phosphate import ATP-binding protein PstB (279 aa).

Residues 33 to 274 enclose the ABC transporter domain; the sequence is LDINKLNLFY…PLKKKTEDYI (242 aa). 65–72 serves as a coordination point for ATP; it reads GPSGCGKS.

Belongs to the ABC transporter superfamily. Phosphate importer (TC 3.A.1.7) family. In terms of assembly, the complex is composed of two ATP-binding proteins (PstB), two transmembrane proteins (PstC and PstA) and a solute-binding protein (PstS).

It is found in the cell inner membrane. The catalysed reaction is phosphate(out) + ATP + H2O = ADP + 2 phosphate(in) + H(+). Its function is as follows. Part of the ABC transporter complex PstSACB involved in phosphate import. Responsible for energy coupling to the transport system. In Colwellia psychrerythraea (strain 34H / ATCC BAA-681) (Vibrio psychroerythus), this protein is Phosphate import ATP-binding protein PstB.